Reading from the N-terminus, the 151-residue chain is Aspartate carbamoyltransferase regulatory chain (151 aa).

Zn(2+)-binding residues include C108, C113, C138, and C141.

It belongs to the PyrI family. In terms of assembly, contains catalytic and regulatory chains. The cofactor is Zn(2+).

Functionally, involved in allosteric regulation of aspartate carbamoyltransferase. The polypeptide is Aspartate carbamoyltransferase regulatory chain (Pyrobaculum islandicum (strain DSM 4184 / JCM 9189 / GEO3)).